Consider the following 562-residue polypeptide: Putative transport protein PC1_1686 (562 aa).

The next 6 membrane-spanning stretches (helical) occupy residues 8–28 (LLNGNYILLLFVVLSLGLCLG), 32–52 (LGPVQLGNSIGVLVVSLLLGQ), 66–86 (FMLFIFCVGVEAGPNFFSIFF), 93–113 (FMLALVMVGSAMLLALGLGKF), 116–136 (WGIGLTAGMLAGSMTSTPVLV), and 158–178 (HLSLGYALTYLVGLVSLIFGA). RCK C-terminal domains lie at 202-288 (LDAD…NFRD) and 292-373 (VFDR…RIGF). The next 5 helical transmembrane spans lie at 383-403 (LLAFCAFFVIGIMVGLITIQF), 406-426 (FTFGIGNAAGLLFAGIMLGFL), 447-467 (FGLMVFMAGVGLSAGSTINSS), 478-498 (SGLIVSLVPVVICFLFGAYVL), and 537-557 (GTYAIANVLLTLAGSLIVIIW).

The protein belongs to the AAE transporter (TC 2.A.81) family. YbjL subfamily.

It is found in the cell membrane. The polypeptide is Putative transport protein PC1_1686 (Pectobacterium carotovorum subsp. carotovorum (strain PC1)).